A 364-amino-acid chain; its full sequence is Fructose-bisphosphate aldolase B (364 aa).

At alanine 2 the chain carries N-acetylalanine. Lysine 13 carries the post-translational modification N6-succinyllysine. Serine 36 bears the Phosphoserine mark. Threonine 39 is subject to Phosphothreonine. Beta-D-fructose 1,6-bisphosphate is bound at residue arginine 43. Position 89 is a phosphoserine (serine 89). Position 119 is a phosphothreonine (threonine 119). Position 121 is an N6-succinyllysine (lysine 121). A Phosphoserine modification is found at serine 132. Glutamate 188 functions as the Proton acceptor in the catalytic mechanism. Catalysis depends on lysine 230, which acts as the Schiff-base intermediate with dihydroxyacetone-P. Phosphoserine occurs at positions 272, 276, 299, and 301. A beta-D-fructose 1,6-bisphosphate-binding site is contributed by 272–274 (SGG). Arginine 304 lines the beta-D-fructose 1,6-bisphosphate pocket. Serine 309 bears the Phosphoserine mark. The residue at position 317 (lysine 317) is an N6-succinyllysine.

It belongs to the class I fructose-bisphosphate aldolase family. As to quaternary structure, homotetramer. Interacts with BBS1, BBS2, BBS4 and BBS7. Forms a ternary complex with G6PD and TP53; this interaction is direct.

It localises to the cytoplasm. The protein resides in the cytosol. Its subcellular location is the cytoskeleton. It is found in the microtubule organizing center. The protein localises to the centrosome. It localises to the centriolar satellite. It catalyses the reaction beta-D-fructose 1,6-bisphosphate = D-glyceraldehyde 3-phosphate + dihydroxyacetone phosphate. The enzyme catalyses beta-D-fructose 1-phosphate = D-glyceraldehyde + dihydroxyacetone phosphate. It functions in the pathway carbohydrate degradation; glycolysis; D-glyceraldehyde 3-phosphate and glycerone phosphate from D-glucose: step 4/4. Its pathway is carbohydrate biosynthesis; gluconeogenesis. It participates in carbohydrate metabolism; fructose metabolism. Functionally, catalyzes the aldol cleavage of fructose 1,6-biphosphate to form two triosephosphates dihydroxyacetone phosphate and D-glyceraldehyde 3-phosphate in glycolysis as well as the reverse stereospecific aldol addition reaction in gluconeogenesis. In fructolysis, metabolizes fructose 1-phosphate derived from the phosphorylation of dietary fructose by fructokinase into dihydroxyacetone phosphate and D-glyceraldehyde. Acts as an adapter independently of its enzymatic activity, exerts a tumor suppressor role by stabilizing the ternary complex with G6PD and TP53 to inhibit G6PD activity and keep oxidative pentose phosphate metabolism in check. The protein is Fructose-bisphosphate aldolase B (ALDOB) of Oryctolagus cuniculus (Rabbit).